The primary structure comprises 116 residues: Large ribosomal subunit protein bL20 (116 aa).

It belongs to the bacterial ribosomal protein bL20 family.

In terms of biological role, binds directly to 23S ribosomal RNA and is necessary for the in vitro assembly process of the 50S ribosomal subunit. It is not involved in the protein synthesizing functions of that subunit. This is Large ribosomal subunit protein bL20 from Nautilia profundicola (strain ATCC BAA-1463 / DSM 18972 / AmH).